The following is a 318-amino-acid chain: Ferrochelatase (318 aa).

Fe cation-binding residues include His-194 and Glu-275.

Belongs to the ferrochelatase family.

It localises to the cytoplasm. The catalysed reaction is heme b + 2 H(+) = protoporphyrin IX + Fe(2+). It functions in the pathway porphyrin-containing compound metabolism; protoheme biosynthesis; protoheme from protoporphyrin-IX: step 1/1. Functionally, catalyzes the ferrous insertion into protoporphyrin IX. This chain is Ferrochelatase, found in Xanthomonas axonopodis pv. citri (strain 306).